The primary structure comprises 512 residues: Glutamyl-tRNA(Gln) amidotransferase subunit A (512 aa).

Residues K82 and S157 each act as charge relay system in the active site. Catalysis depends on S181, which acts as the Acyl-ester intermediate.

This sequence belongs to the amidase family. GatA subfamily. Heterotrimer of A, B and C subunits.

It carries out the reaction L-glutamyl-tRNA(Gln) + L-glutamine + ATP + H2O = L-glutaminyl-tRNA(Gln) + L-glutamate + ADP + phosphate + H(+). Allows the formation of correctly charged Gln-tRNA(Gln) through the transamidation of misacylated Glu-tRNA(Gln) in organisms which lack glutaminyl-tRNA synthetase. The reaction takes place in the presence of glutamine and ATP through an activated gamma-phospho-Glu-tRNA(Gln). This is Glutamyl-tRNA(Gln) amidotransferase subunit A from Bordetella pertussis (strain Tohama I / ATCC BAA-589 / NCTC 13251).